The sequence spans 451 residues: Trigger factor (451 aa).

In terms of domain architecture, PPIase FKBP-type spans 165-250 (DDKLTIDFEG…LRQIQAREAL (86 aa)).

This sequence belongs to the FKBP-type PPIase family. Tig subfamily.

The protein resides in the cytoplasm. The catalysed reaction is [protein]-peptidylproline (omega=180) = [protein]-peptidylproline (omega=0). Functionally, involved in protein export. Acts as a chaperone by maintaining the newly synthesized protein in an open conformation. Functions as a peptidyl-prolyl cis-trans isomerase. The sequence is that of Trigger factor from Helicobacter pylori (strain Shi470).